A 164-amino-acid chain; its full sequence is Axial regulator YABBY 5 (164 aa).

Residues 16–43 (CNFCNIILAVNVPCSSLFDIVTVRCGHC) form a C4-type zinc finger.

Belongs to the YABBY family. Binds to LUG and LUH; these complexes promote adaxial cell identity in leaves as well as embryonic shoot apical meristem (SAM) initiation and postembryonic SAM maintenance. Interacts with SPL/NZZ and SPEAR2.

Its subcellular location is the nucleus. Promotes adaxial cell identity. Regulates the initiation of embryonic shoot apical meristem (SAM) development. The polypeptide is Axial regulator YABBY 5 (YAB5) (Arabidopsis thaliana (Mouse-ear cress)).